The chain runs to 630 residues: Cytochrome B pre-mRNA-processing protein 2 (630 aa).

It localises to the mitochondrion. Its function is as follows. Appears to be specifically required for the splicing of the terminal intron (bI5) of the cytochrome b pre-mRNA. Can also stimulates the splicing of the omega intron of the precursor of large ribosomal RNA. The protein is Cytochrome B pre-mRNA-processing protein 2 (CBP2) of Saccharomyces cerevisiae (strain ATCC 204508 / S288c) (Baker's yeast).